We begin with the raw amino-acid sequence, 204 residues long: Dephospho-CoA kinase (204 aa).

The DPCK domain maps to 12-204; that stretch reads RIGVTGGIAS…AWRDQISSIC (193 aa). 20-25 is an ATP binding site; that stretch reads ASGKSS.

It belongs to the CoaE family.

Its subcellular location is the cytoplasm. The enzyme catalyses 3'-dephospho-CoA + ATP = ADP + CoA + H(+). It participates in cofactor biosynthesis; coenzyme A biosynthesis; CoA from (R)-pantothenate: step 5/5. In terms of biological role, catalyzes the phosphorylation of the 3'-hydroxyl group of dephosphocoenzyme A to form coenzyme A. This chain is Dephospho-CoA kinase, found in Prochlorococcus marinus (strain MIT 9313).